Here is a 1062-residue protein sequence, read N- to C-terminus: Exportin-T (1062 aa).

It belongs to the exportin family.

It localises to the nucleus. The protein resides in the cytoplasm. Its function is as follows. tRNA nucleus export receptor which facilitates tRNA translocation across the nuclear pore complex. Involved in pre-tRNA splicing, probably by affecting the interaction of pre-tRNA with splicing endonuclease. The sequence is that of Exportin-T (LOS1) from Vanderwaltozyma polyspora (strain ATCC 22028 / DSM 70294 / BCRC 21397 / CBS 2163 / NBRC 10782 / NRRL Y-8283 / UCD 57-17) (Kluyveromyces polysporus).